Reading from the N-terminus, the 394-residue chain is Metallophosphoesterase 1 (394 aa).

A helical membrane pass occupies residues 27–47 (TVVVISVLLFCEYFIYYLVLF). Positions 74, 116, 154, 247, 301, and 303 each coordinate a divalent metal cation. A helical membrane pass occupies residues 354–374 (TVLTTYCAAAAFLLVLILAHF).

It belongs to the metallophosphoesterase superfamily. MPPE1 family. Interacts with GPI-anchor proteins (via the GPI portion). Interacts with TMED10. The cofactor is Mn(2+).

It is found in the endoplasmic reticulum-Golgi intermediate compartment membrane. Functionally, metallophosphoesterase that catalyzes the removal of a side-chain ethanolamine-phosphate (EtNP) from the second mannose of the GPI-anchor protein intermediate. Participates in the glycan remodeling steps of GPI-anchor maturation to allow an efficient transport of GPI-anchor proteins from the endoplasmic reticulum to the Golgi. The sequence is that of Metallophosphoesterase 1 from Rattus norvegicus (Rat).